Reading from the N-terminus, the 365-residue chain is ATP-dependent (S)-NAD(P)H-hydrate dehydratase (365 aa).

Residues 1–43 (MLVKPSIISGLVRLTSHSPSSSSSVLRRQEFLVRTLCGSPIIR) constitute a chloroplast transit peptide. Position 2 is an N-acetylserine (Leu-2). The 309-residue stretch at 53-361 (AESVLRTVTP…ECLGESLEDI (309 aa)) folds into the YjeF C-terminal domain. (6S)-NADPHX-binding positions include Gly-169 and 222 to 228 (NVNEYKR). Residues 262–266 (KGKSD) and 281–290 (GSPRRCGGQG) contribute to the ATP site. Asp-291 provides a ligand contact to (6S)-NADPHX.

This sequence belongs to the NnrD/CARKD family. Requires Mg(2+) as cofactor.

Its subcellular location is the plastid. The protein localises to the chloroplast. It is found in the cytoplasm. It catalyses the reaction (6S)-NADHX + ATP = ADP + phosphate + NADH + H(+). It carries out the reaction (6S)-NADPHX + ATP = ADP + phosphate + NADPH + H(+). Its function is as follows. Catalyzes the dehydration of the S-form of NAD(P)HX at the expense of ATP, which is converted to ADP. Together with NAD(P)HX epimerase, which catalyzes the epimerization of the S- and R-forms, the enzyme allows the repair of both epimers of NAD(P)HX, a damaged form of NAD(P)H that is a result of enzymatic or heat-dependent hydration. The protein is ATP-dependent (S)-NAD(P)H-hydrate dehydratase of Arabidopsis thaliana (Mouse-ear cress).